The following is a 125-amino-acid chain: Holo-[acyl-carrier-protein] synthase (125 aa).

2 residues coordinate Mg(2+): aspartate 8 and glutamate 57.

Belongs to the P-Pant transferase superfamily. AcpS family. Requires Mg(2+) as cofactor.

The protein localises to the cytoplasm. It catalyses the reaction apo-[ACP] + CoA = holo-[ACP] + adenosine 3',5'-bisphosphate + H(+). Functionally, transfers the 4'-phosphopantetheine moiety from coenzyme A to a Ser of acyl-carrier-protein. The polypeptide is Holo-[acyl-carrier-protein] synthase (Blochmanniella floridana).